The chain runs to 171 residues: MTAKKKEVDDEKRRRILERNRIAASKFRQKKKEWIKELEQTANAAFEQSKRLQLLLSQLQQEAFRLKSQLLAHQGCQCSVKIRSVLTDFQTAHNALHSQHMAYRPVQPPPGDNMLESVVSVSPTQMHPSLQGLPPNQHPQMPPSSQQPNSDDVQQHMFSAAGLPRSLGGPI.

Positions 10-73 constitute a bZIP domain; that stretch reads DEKRRRILER…FRLKSQLLAH (64 aa). The interval 12 to 51 is basic motif; it reads KRRRILERNRIAASKFRQKKKEWIKELEQTANAAFEQSKR. Residues 52 to 66 form a leucine-zipper region; it reads LQLLLSQLQQEAFRL. The disordered stretch occupies residues 125–171; it reads QMHPSLQGLPPNQHPQMPPSSQQPNSDDVQQHMFSAAGLPRSLGGPI. The span at 143–152 shows a compositional bias: low complexity; it reads PSSQQPNSDD.

Belongs to the bZIP family. In terms of assembly, heterodimer of pcr1/mts2 and atf1/mts1.

It is found in the nucleus. Functionally, involved in regulation of gene expression for sexual development. Binds and activates CRE sites (cAMP-response elements, also known as M26 meiotic recombination hotspots). The polypeptide is Transcription factor pcr1 (pcr1) (Schizosaccharomyces pombe (strain 972 / ATCC 24843) (Fission yeast)).